Reading from the N-terminus, the 273-residue chain is 3-methyl-2-oxobutanoate hydroxymethyltransferase (273 aa).

2 residues coordinate Mg(2+): Asp53 and Asp92. 3-methyl-2-oxobutanoate contacts are provided by residues 53 to 54, Asp92, and Lys122; that span reads DS. Residue Glu124 coordinates Mg(2+). Glu191 acts as the Proton acceptor in catalysis.

This sequence belongs to the PanB family. As to quaternary structure, homodecamer; pentamer of dimers. It depends on Mg(2+) as a cofactor.

The protein localises to the cytoplasm. It carries out the reaction 3-methyl-2-oxobutanoate + (6R)-5,10-methylene-5,6,7,8-tetrahydrofolate + H2O = 2-dehydropantoate + (6S)-5,6,7,8-tetrahydrofolate. It functions in the pathway cofactor biosynthesis; (R)-pantothenate biosynthesis; (R)-pantoate from 3-methyl-2-oxobutanoate: step 1/2. In terms of biological role, catalyzes the reversible reaction in which hydroxymethyl group from 5,10-methylenetetrahydrofolate is transferred onto alpha-ketoisovalerate to form ketopantoate. The protein is 3-methyl-2-oxobutanoate hydroxymethyltransferase of Parabacteroides distasonis (strain ATCC 8503 / DSM 20701 / CIP 104284 / JCM 5825 / NCTC 11152).